Consider the following 431-residue polypeptide: MKILVIGSGGREHALAWKIAQSARVSEVLVAPGNAGTATEAKCRNVAIKVDDLDGLLALAQREAVALTVVGPEVPLVLGVVDRFHAAGLRIFGPTAKAAQLEGSKAFAKDFLARHGIPTAYYAVHTEVDAALAYVREKGTPIVVKADGLAAGKGVIVALTLAEAEDAVRDMLSGNAFGDAGARVVIEEFLDGEEASFISMVDGKHALPMATSQDHKRVGDGDTGPNTGGMGAYSPAPVVTPEVHARVMREVVEPTVQGMIADGVPFTGFLYAGLMIDAHGAPKVIEFNVRFGDPETQPVMLRLQSDLVDLLEAAIDGKLDGAHAQWDPRPSLGVVIAARPYPDTPVTGEVIAGLDAVPASAKVFHAGTALNAAGEVVSAGGRVLCVAALGDSVQDAQRTAYAGLKPIHWSSAFQRSDIGWRAIARERQAQG.

Residues 109–316 form the ATP-grasp domain; it reads KDFLARHGIP…LVDLLEAAID (208 aa). ATP is bound at residue 135–196; that stretch reads VREKGTPIVV…EEFLDGEEAS (62 aa). Residues Glu286 and Asn288 each coordinate Mg(2+).

This sequence belongs to the GARS family. The cofactor is Mg(2+). Requires Mn(2+) as cofactor.

The enzyme catalyses 5-phospho-beta-D-ribosylamine + glycine + ATP = N(1)-(5-phospho-beta-D-ribosyl)glycinamide + ADP + phosphate + H(+). It participates in purine metabolism; IMP biosynthesis via de novo pathway; N(1)-(5-phospho-D-ribosyl)glycinamide from 5-phospho-alpha-D-ribose 1-diphosphate: step 2/2. This Xanthomonas axonopodis pv. citri (strain 306) protein is Phosphoribosylamine--glycine ligase.